Consider the following 251-residue polypeptide: Triosephosphate isomerase (251 aa).

Asn-9–Lys-11 lines the substrate pocket. Residue His-95 is the Electrophile of the active site. Residue Glu-167 is the Proton acceptor of the active site. Residues Gly-173, Ser-213, and Gly-234–Gly-235 each bind substrate.

Belongs to the triosephosphate isomerase family. In terms of assembly, homodimer.

The protein localises to the cytoplasm. It catalyses the reaction D-glyceraldehyde 3-phosphate = dihydroxyacetone phosphate. The protein operates within carbohydrate biosynthesis; gluconeogenesis. It participates in carbohydrate degradation; glycolysis; D-glyceraldehyde 3-phosphate from glycerone phosphate: step 1/1. Its function is as follows. Involved in the gluconeogenesis. Catalyzes stereospecifically the conversion of dihydroxyacetone phosphate (DHAP) to D-glyceraldehyde-3-phosphate (G3P). In Enterococcus faecalis (strain ATCC 700802 / V583), this protein is Triosephosphate isomerase.